We begin with the raw amino-acid sequence, 1257 residues long: Neural cell adhesion molecule L1 (1257 aa).

The first 19 residues, 1-19 (MVVALRYVWPLLLCSPCLL), serve as a signal peptide directing secretion. Over 20–1120 (IQIPEEYEGH…RLPPAGFATE (1101 aa)) the chain is Extracellular. Ig-like C2-type domains follow at residues 35–125 (PVIT…TAMS), 139–226 (PKET…EPID), 240–328 (PRLL…YYVT), 333–420 (PYWL…AYIY), 425–507 (PAKI…NNVT), and 518–607 (TQIT…AQLL). Disulfide bonds link C57–C114 and C158–C209. N-linked (GlcNAc...) asparagine glycans are attached at residues N100, N203, N247, and N294. Disulfide bonds link C264-C312 and C354-C404. Residues N433, N479, N490, and N505 are each glycosylated (N-linked (GlcNAc...) asparagine). Cysteines 448 and 497 form a disulfide. The cysteines at positions 539 and 591 are disulfide-linked. Positions 554-556 (RGD) match the Cell attachment site motif. 2 N-linked (GlcNAc...) asparagine glycosylation sites follow: N588 and N671. 5 consecutive Fibronectin type-III domains span residues 615–712 (VPRL…TPEA), 717–810 (NPVD…SGED), 814–916 (AIPE…TPEG), 920–1015 (HPEA…MALS), and 1016–1115 (GISD…LPPA). Residues 698 to 725 (GEPSPVSETVVTPEAAPEKNPVDVKGEG) are disordered. Over residues 713–725 (APEKNPVDVKGEG) the composition is skewed to basic and acidic residues. N-linked (GlcNAc...) asparagine glycans are attached at residues N726, N777, N825, N849, N876, N979, N1022, N1030, N1071, and N1105. A helical membrane pass occupies residues 1121 to 1143 (GWFIGFVSAIILLLLVLLILCFI). Residues 1144-1257 (KRSKGGKYSV…SPINPAVALE (114 aa)) are Cytoplasmic-facing. A phosphoserine mark is found at S1163, T1172, R1177, and S1178. Over residues 1176-1187 (YRSLESDNEEKA) the composition is skewed to basic and acidic residues. 2 disordered regions span residues 1176-1207 (YRSL…SDDS) and 1226-1257 (IGQY…VALE). S1181 carries the phosphoserine; by CaMK2 modification. S1194, S1243, S1244, and S1248 each carry phosphoserine. Positions 1241–1250 (NDSSGATSPI) are enriched in polar residues.

It belongs to the immunoglobulin superfamily. L1/neurofascin/NgCAM family. In terms of assembly, interacts with SHTN1; the interaction occurs in axonal growth cones. Interacts with isoform 2 of BSG.

The protein resides in the cell membrane. Its subcellular location is the cell projection. It localises to the growth cone. It is found in the axon. The protein localises to the dendrite. Its function is as follows. Neural cell adhesion molecule involved in the dynamics of cell adhesion and in the generation of transmembrane signals at tyrosine kinase receptors. During brain development, critical in multiple processes, including neuronal migration, axonal growth and fasciculation, and synaptogenesis. In the mature brain, plays a role in the dynamics of neuronal structure and function, including synaptic plasticity. This Homo sapiens (Human) protein is Neural cell adhesion molecule L1 (L1CAM).